A 213-amino-acid chain; its full sequence is Putative thiamine-phosphate synthase (213 aa).

4-amino-2-methyl-5-(diphosphooxymethyl)pyrimidine-binding positions include 38 to 42 (QLREK) and Asn-70. Asp-71 is a Mg(2+) binding site. Ser-109 is a binding site for 4-amino-2-methyl-5-(diphosphooxymethyl)pyrimidine. 135–137 (TPS) serves as a coordination point for 2-[(2R,5Z)-2-carboxy-4-methylthiazol-5(2H)-ylidene]ethyl phosphate. Position 138 (Lys-138) interacts with 4-amino-2-methyl-5-(diphosphooxymethyl)pyrimidine. Residues Gly-166 and 186–187 (IS) each bind 2-[(2R,5Z)-2-carboxy-4-methylthiazol-5(2H)-ylidene]ethyl phosphate.

This sequence belongs to the thiamine-phosphate synthase family. Requires Mg(2+) as cofactor.

It catalyses the reaction 2-[(2R,5Z)-2-carboxy-4-methylthiazol-5(2H)-ylidene]ethyl phosphate + 4-amino-2-methyl-5-(diphosphooxymethyl)pyrimidine + 2 H(+) = thiamine phosphate + CO2 + diphosphate. The catalysed reaction is 2-(2-carboxy-4-methylthiazol-5-yl)ethyl phosphate + 4-amino-2-methyl-5-(diphosphooxymethyl)pyrimidine + 2 H(+) = thiamine phosphate + CO2 + diphosphate. The enzyme catalyses 4-methyl-5-(2-phosphooxyethyl)-thiazole + 4-amino-2-methyl-5-(diphosphooxymethyl)pyrimidine + H(+) = thiamine phosphate + diphosphate. It functions in the pathway cofactor biosynthesis; thiamine diphosphate biosynthesis; thiamine phosphate from 4-amino-2-methyl-5-diphosphomethylpyrimidine and 4-methyl-5-(2-phosphoethyl)-thiazole: step 1/1. In terms of biological role, condenses 4-methyl-5-(beta-hydroxyethyl)thiazole monophosphate (THZ-P) and 2-methyl-4-amino-5-hydroxymethyl pyrimidine pyrophosphate (HMP-PP) to form thiamine monophosphate (TMP). The polypeptide is Putative thiamine-phosphate synthase (thiE) (Geobacter sulfurreducens (strain ATCC 51573 / DSM 12127 / PCA)).